A 189-amino-acid chain; its full sequence is MKILEQRIKKDGRVLGKDVLKVDSFLNHQVDPELMQAMGEEFATIFSDEKIDKIVTVESSGIAPAVFAGLALHVPVVFARKNKSLTLPENVWTADVYSFTKQTTNHIMIDHRFLSAAENILIIDDFLANGQAVEGLLKIANDANANVVGVGVVIEKTFQKGRQILDERGVRVESLARIKGFENDEVIFL.

Positions 20 and 27 each coordinate xanthine. Position 128–132 (128–132 (ANGQA)) interacts with 5-phospho-alpha-D-ribose 1-diphosphate. Lys156 is a xanthine binding site.

The protein belongs to the purine/pyrimidine phosphoribosyltransferase family. Xpt subfamily. As to quaternary structure, homodimer.

The protein localises to the cytoplasm. The enzyme catalyses XMP + diphosphate = xanthine + 5-phospho-alpha-D-ribose 1-diphosphate. The protein operates within purine metabolism; XMP biosynthesis via salvage pathway; XMP from xanthine: step 1/1. Converts the preformed base xanthine, a product of nucleic acid breakdown, to xanthosine 5'-monophosphate (XMP), so it can be reused for RNA or DNA synthesis. This is Xanthine phosphoribosyltransferase from Leuconostoc mesenteroides subsp. mesenteroides (strain ATCC 8293 / DSM 20343 / BCRC 11652 / CCM 1803 / JCM 6124 / NCDO 523 / NBRC 100496 / NCIMB 8023 / NCTC 12954 / NRRL B-1118 / 37Y).